The primary structure comprises 290 residues: uncharacterized protein (290 aa).

Positions Met1–Ala25 are cleaved as a signal peptide. Cys26 is lipidated: N-palmitoyl cysteine. Cys26 carries the S-diacylglycerol cysteine lipid modification. The tract at residues Gly183–Phe203 is disordered. Low complexity predominate over residues Ser186–Gly197.

Belongs to the MG439/MG440 family.

It localises to the cell membrane. This is an uncharacterized protein from Mycoplasma pneumoniae (strain ATCC 29342 / M129 / Subtype 1) (Mycoplasmoides pneumoniae).